The sequence spans 123 residues: Iron-sulfur cluster insertion protein ErpA (123 aa).

Residues Cys-51, Cys-115, and Cys-117 each contribute to the iron-sulfur cluster site.

It belongs to the HesB/IscA family. In terms of assembly, homodimer. Iron-sulfur cluster serves as cofactor.

Required for insertion of 4Fe-4S clusters for at least IspG. This Halorhodospira halophila (strain DSM 244 / SL1) (Ectothiorhodospira halophila (strain DSM 244 / SL1)) protein is Iron-sulfur cluster insertion protein ErpA.